A 2128-amino-acid chain; its full sequence is Spectrin beta chain, erythrocytic (2128 aa).

The segment covering 1 to 15 (MTSATEFENVGNQPP) has biased composition (polar residues). Residues 1–30 (MTSATEFENVGNQPPFSRINARWDAPDDEL) are disordered. The segment at 2–275 (TSATEFENVG…IITYVVAFYH (274 aa)) is actin-binding. A Phosphoserine modification is found at serine 36. Calponin-homology (CH) domains are found at residues 54–158 (VVQK…LRFQ) and 173–278 (RSAK…HYFS). Threonine 104 is modified (phosphothreonine). Spectrin repeat units lie at residues 303 to 411 (MIEK…LALR), 416 to 517 (RQEF…QRLE), 521 to 627 (ALQK…QLEQ), 630 to 733 (RLWK…DLQD), 736 to 838 (NFFQ…KLQE), 845 to 942 (VFGE…REAV), 950 to 1050 (NYCV…LSLG), 1054 to 1157 (KLQA…NTLT), 1162 to 1250 (FQEF…RHKK), 1267 to 1368 (ELQN…EQLS), 1381 to 1455 (ADLN…FLDL), 1473 to 1574 (LQIS…RLRD), 1576 to 1680 (HEAQ…RLEN), 1682 to 1784 (YHLF…MQLL), 1789 to 1890 (DLHR…RAQL), 1897 to 1997 (FRFF…DRLH), and 2004 to 2064 (QFSR…KPTT). Phosphoserine is present on serine 1289. The residue at position 2034 (serine 2034) is a Phosphoserine. Positions 2062–2108 (PTTLELKERQTPERPTEEPGPQEEEGETAGEAPQVHHAATERTSPVS) are disordered. A phosphothreonine mark is found at threonine 2064, threonine 2072, and threonine 2101. Basic and acidic residues predominate over residues 2066-2078 (ELKERQTPERPTE). 5 positions are modified to phosphoserine: serine 2105, serine 2108, serine 2114, serine 2116, and serine 2119.

Belongs to the spectrin family. As to quaternary structure, composed of nonhomologous chains, alpha and beta, which aggregate to form dimers, tetramers, and higher polymers. Interacts with BCAM.

The protein localises to the cytoplasm. It localises to the cytoskeleton. The protein resides in the cell cortex. In terms of biological role, spectrin is the major constituent of the cytoskeletal network underlying the erythrocyte plasma membrane. It associates with band 4.1 and actin to form the cytoskeletal superstructure of the erythrocyte plasma membrane. This Mus musculus (Mouse) protein is Spectrin beta chain, erythrocytic (Sptb).